Reading from the N-terminus, the 569-residue chain is Proline--tRNA ligase (569 aa).

This sequence belongs to the class-II aminoacyl-tRNA synthetase family. ProS type 1 subfamily. In terms of assembly, homodimer.

It is found in the cytoplasm. The enzyme catalyses tRNA(Pro) + L-proline + ATP = L-prolyl-tRNA(Pro) + AMP + diphosphate. In terms of biological role, catalyzes the attachment of proline to tRNA(Pro) in a two-step reaction: proline is first activated by ATP to form Pro-AMP and then transferred to the acceptor end of tRNA(Pro). As ProRS can inadvertently accommodate and process non-cognate amino acids such as alanine and cysteine, to avoid such errors it has two additional distinct editing activities against alanine. One activity is designated as 'pretransfer' editing and involves the tRNA(Pro)-independent hydrolysis of activated Ala-AMP. The other activity is designated 'posttransfer' editing and involves deacylation of mischarged Ala-tRNA(Pro). The misacylated Cys-tRNA(Pro) is not edited by ProRS. In Legionella pneumophila (strain Paris), this protein is Proline--tRNA ligase.